Consider the following 66-residue polypeptide: Putative alpha-neurotoxin RjAa44 (66 aa).

One can recognise an LCN-type CS-alpha/beta domain in the interval 1–60 (KEGYPVDWGNCKYECMSDAYCKDLCADRKAKSGYCYKLNWSCYCEGLPDDSPIKTNGHCR). 4 cysteine pairs are disulfide-bonded: cysteine 11-cysteine 59, cysteine 15-cysteine 35, cysteine 21-cysteine 42, and cysteine 25-cysteine 44.

It belongs to the long (4 C-C) scorpion toxin superfamily. Sodium channel inhibitor family. Alpha subfamily. As to expression, expressed by the venom gland.

Its subcellular location is the secreted. Functionally, alpha toxins bind voltage-independently at site-3 of sodium channels (Nav) and inhibit the inactivation of the activated channels, thereby blocking neuronal transmission. This Rhopalurus junceus (Caribbean blue scorpion) protein is Putative alpha-neurotoxin RjAa44.